Here is a 669-residue protein sequence, read N- to C-terminus: Potassium voltage-gated channel subfamily KQT member 1 (669 aa).

Topologically, residues 1–120 (MDTASSPPNA…YNFLERPTGW (120 aa)) are cytoplasmic. Ser-27 bears the Phosphoserine; by PKA mark. A helical membrane pass occupies residues 121–142 (KCFVYHFTVFLIVLVCLIFSVL). The Extracellular portion of the chain corresponds to 143–153 (STIEQYAALAT). A helical membrane pass occupies residues 154 to 176 (GTLFWMEIVLVVFFGTEYVVRLW). Residues 177-192 (SAGCRSKYVGIWGRLR) lie on the Cytoplasmic side of the membrane. The chain crosses the membrane as a helical span at residues 193-218 (FARKPISIIDLIVVVASMVVLCVGSK). Topologically, residues 219–226 (GQVFATSA) are extracellular. A helical; Voltage-sensor membrane pass occupies residues 227–242 (IRGIRFLQILRMLHVD). The tract at residues 238 to 246 (MLHVDRQGG) is interaction with KCNE3. The Cytoplasmic portion of the chain corresponds to 243–260 (RQGGTWRLLGSVVFIHRQ). Residue Gln-244 participates in a 1,2-diacyl-sn-glycero-3-phospho-(1D-myo-inositol-4,5-bisphosphate) binding. Residues 261–283 (ELITTLYIGFLGLIFSSYFVYLA) form a helical membrane-spanning segment. Residues 284–299 (EKDAVNESGRIEFGSY) lie on the Extracellular side of the membrane. Asn-289 is a glycosylation site (N-linked (GlcNAc...) asparagine). Positions 300–320 (ADALWWGVVTVTTIGYGDKVP) form an intramembrane region, pore-forming. At 321-322 (QT) the chain is on the extracellular side. The helical transmembrane segment at 323-348 (WVGKTIASCFSVFAISFFALPAGILG) threads the bilayer. Residues 349–669 (SGFALKVQQK…VPQTGPDEGS (321 aa)) lie on the Cytoplasmic side of the membrane. Residues 370–382 (AAASLIQTAWRCY) form an interaction with CALM region. Ser-407 and Ser-409 each carry phosphoserine. Residues 515 to 529 (KVIRRMQYFVAKKKF) are interaction with CALM; calcium-dependent. Residues 535–572 (PYDVRDVIEQYSQGHLNLMVRIKELQRRLDQSIGKPSL) form an interaction with KCNE1 C-terminus region. Residues 585–621 (SNTIGARLNRVEDKVTQLDQRLVIITDMLHQLLSLQQ) are a coiled coil. An interaction with AKAP9 region spans residues 588 to 616 (IGARLNRVEDKVTQLDQRLVIITDMLHQL). The interval 589 to 620 (GARLNRVEDKVTQLDQRLVIITDMLHQLLSLQ) is C-terminal assembly domain (tetramerization).

It belongs to the potassium channel family. KQT (TC 1.A.1.15) subfamily. Kv7.1/KCNQ1 sub-subfamily. In terms of assembly, tetramer. Heterotetramer with KCNE1; targets to the membrane raft. Interacts (via C-terminus) with CALM; forms a heterooctameric structure (with 4:4 KCNQ1:CALM stoichiometry) in a calcium-independent manner. Interacts with AKAP9; targets protein kinase A (PKA) catalytic and regulatory subunits and protein phosphatase 1 (PP1) to the KCNQ1-KCNE1 complex, allowing PKA-mediated phosphorylation and increase of delayed rectifier potassium channel activity. Interacts with KCNE2; form a heterooligomer complex that targets to the membrane raft and leading to currents with an apparently instantaneous activation, a rapid deactivation process and a linear current-voltage relationship and decreases the amplitude of the outward current. Interacts with AP2M1; mediates estrogen-induced internalization via clathrin-coated vesicles. Interacts with NEDD4L; promotes internalization and decreases I(Ks) currents. Interacts with USP2; counteracts the NEDD4L-specific down-regulation of I(Ks) and restore plasma membrane localization. Heterotetramer with KCNQ5; has a voltage-gated potassium channel activity. Interacts with KCNE3; produces a current with nearly instantaneous activation with a linear current-voltage relationship and alters membrane raft localization. Interacts with KCNE4; impairs KCNQ1 localization in lipid rafts and inhibits voltage-gated potassium channel activity. Interacts with KCNE5; impairs KCNQ1 localization in lipid rafts and only conducts current upon strong and continued depolarization. Interacts with SLC5A3; forms coregulatory channel-transporter complexes that modulate Na(+)-coupled myo-inositol influx through the transporter. Post-translationally, phosphorylation at Ser-27 by PKA; increases delayed rectifier potassium channel activity of the KCNQ1-KCNE1 complex through a macromolecular complex that includes PKA, PP1, and the targeting protein AKAP9. In terms of processing, ubiquitinated by NEDD4L; promotes internalization. The ubiquitinylated form is internalized through a clathrin-mediated endocytosis by interacting with AP2M1 and is recycled back to the cell membrane via RAB4A and RAB11A. Deubiquitinated by USP2; counteracts the NEDD4L-specific down-regulation of I(Ks) and restores the membrane localization.

It localises to the cell membrane. It is found in the cytoplasmic vesicle membrane. The protein resides in the early endosome. The protein localises to the membrane raft. Its subcellular location is the endoplasmic reticulum. It localises to the basolateral cell membrane. It is found in the apical cell membrane. It carries out the reaction K(+)(in) = K(+)(out). PIP2 molecule is essential to activate KCNQ channels by inducing the coupling of the voltage-sensing domain (VSD) and the pore-forming domain (PD). Upon channel activation, PIP2 disrupts the VSD-calmodulin/CALM interactions, causing the release of CALM from the VSD which triggers the opening of the gate. Calcium potentiates KCNQ1 channel current through calcium-bound CALM. Calcium-bound CALM competes with PIP2 to stabilize the channel open state. In terms of biological role, pore-forming subunit of the voltage-gated potassium (Kv) channel involved in the regulation of cardiomyocyte excitability and important in normal development and functions of myocardium, inner ear, stomach and colon. Associates with KCNE beta subunits that modulates current kinetics. Induces a voltage-dependent by rapidly activating and slowly deactivating potassium-selective outward current. Also promotes a delayed voltage activated potassium current showing outward rectification characteristic. During beta-adrenergic receptor stimulation participates in cardiac repolarization by associating with KCNE1 to form the I(Ks) cardiac potassium current that increases the amplitude and slows down the activation kinetics of outward potassium current I(Ks). Muscarinic agonist oxotremorine-M strongly suppresses KCNQ1/KCNE1 current. When associated with KCNE3, forms the potassium channel that is important for cyclic AMP-stimulated intestinal secretion of chloride ions. This interaction with KCNE3 is reduced by 17beta-estradiol, resulting in the reduction of currents. During conditions of increased substrate load, maintains the driving force for proximal tubular and intestinal sodium ions absorption, gastric acid secretion, and cAMP-induced jejunal chloride ions secretion. Allows the provision of potassium ions to the luminal membrane of the secretory canaliculus in the resting state as well as during stimulated acid secretion. When associated with KCNE2, forms a heterooligomer complex leading to currents with an apparently instantaneous activation, a rapid deactivation process and a linear current-voltage relationship and decreases the amplitude of the outward current. When associated with KCNE4, inhibits voltage-gated potassium channel activity. When associated with KCNE5, this complex only conducts current upon strong and continued depolarization. Also forms a heterotetramer with KCNQ5 that has a voltage-gated potassium channel activity. Binds with phosphatidylinositol 4,5-bisphosphate. KCNQ1-KCNE2 channel associates with Na(+)-coupled myo-inositol symporter in the apical membrane of choroid plexus epithelium and regulates the myo-inositol gradient between blood and cerebrospinal fluid with an impact on neuron excitability. This is Potassium voltage-gated channel subfamily KQT member 1 from Rattus norvegicus (Rat).